Reading from the N-terminus, the 255-residue chain is Ribonuclease HII (255 aa).

In terms of domain architecture, RNase H type-2 spans Ala72 to Leu255. Asp78, Glu79, and Asp170 together coordinate a divalent metal cation.

This sequence belongs to the RNase HII family. The cofactor is Mn(2+). It depends on Mg(2+) as a cofactor.

Its subcellular location is the cytoplasm. It catalyses the reaction Endonucleolytic cleavage to 5'-phosphomonoester.. Endonuclease that specifically degrades the RNA of RNA-DNA hybrids. The sequence is that of Ribonuclease HII from Staphylococcus aureus (strain bovine RF122 / ET3-1).